The sequence spans 267 residues: Putative methylsterol monooxygenase DDB_G0270946 (267 aa).

The next 3 helical transmembrane spans lie at 31-51, 72-92, and 110-130; these read FIAHQVFYFGCFIPFLIADFI, YCAIKVILTQVLIQLPMMYIF, and IPYLLLTLVSSFIIEDFYFYW. In terms of domain architecture, Fatty acid hydroxylase spans 119-249; that stretch reads SSFIIEDFYF…FTYLDKIFGT (131 aa). A Histidine box-1 motif is present at residues 132–136; that stretch reads HRALH. The short motif at 145–149 is the Histidine box-2 element; the sequence is HKVHH. The Histidine box-3 signature appears at 224-230; sequence FHDYHHE.

The protein belongs to the sterol desaturase family. Requires Fe cation as cofactor.

It is found in the endoplasmic reticulum membrane. It carries out the reaction 4,4-dimethyl-5alpha-cholest-7-en-3beta-ol + 6 Fe(II)-[cytochrome b5] + 3 O2 + 5 H(+) = 4alpha-carboxy-4beta-methyl-5alpha-cholest-7-ene-3beta-ol + 6 Fe(III)-[cytochrome b5] + 4 H2O. Its pathway is steroid biosynthesis; zymosterol biosynthesis; zymosterol from lanosterol: step 3/6. The sequence is that of Putative methylsterol monooxygenase DDB_G0270946 from Dictyostelium discoideum (Social amoeba).